A 301-amino-acid polypeptide reads, in one-letter code: Ribonuclease Z (301 aa).

Residues histidine 60, histidine 62, aspartate 64, histidine 65, histidine 137, aspartate 207, and histidine 265 each contribute to the Zn(2+) site. Aspartate 64 functions as the Proton acceptor in the catalytic mechanism.

It belongs to the RNase Z family. Homodimer. It depends on Zn(2+) as a cofactor.

The enzyme catalyses Endonucleolytic cleavage of RNA, removing extra 3' nucleotides from tRNA precursor, generating 3' termini of tRNAs. A 3'-hydroxy group is left at the tRNA terminus and a 5'-phosphoryl group is left at the trailer molecule.. Zinc phosphodiesterase, which displays some tRNA 3'-processing endonuclease activity. Probably involved in tRNA maturation, by removing a 3'-trailer from precursor tRNA. This is Ribonuclease Z from Exiguobacterium sp. (strain ATCC BAA-1283 / AT1b).